A 737-amino-acid polypeptide reads, in one-letter code: MKEAKIENIDFGNALSERYLAYALSTIMSRSLPDVRDGLKPVHRRLLYAMLQLRLEPNSGYKKCARVVGDVIGKYHPHGDVAVYDTLVRLAQHFSLRYPLIDGQGNFGSIDGDNAAAMRYTESRMTEICTLLMVDIEKDTVDFRPTYDDSDLEPVIMPASFPNLLANGSEGIAVGMATNIPPHNLHELCDALVHLIDHPKAEISDMMNFIKGPDFPTGGIIIDKAELINAAYSTGRGSFRMRSRWEKEELSYGTYQIVVTEIPYQVQKSKLIEQIAILLKDKKIPLVSNIRDESTDIIRLVIEPRDRGCDPQIVMESLFKLTNLESRIQLNMNVIGSNNVPRVMNILEVLQEFLAHRQNIVTRRSTYLLNKIKHRLEILEGLRIAYLNLDEIIKIIREEDEPKAIMMERFKLTEIQVEAILNTRLRSLRKLEEQEIINEHSNLQKQQAILEEILNNPKELWKIVKKEIKAVQTKFGLNTVIGARRTSFEEVTLTNQVVDITAFITKEPITIICSKMGWVRSLKGHNTDLSTIKYKEGDAEKFIIEAYTTDKILIVSSEGRFFTLLADNISKGKGTGESIKLLVDIGNNDITNILVHKSDQLLLLASSIGKGFLVNSNEVMAQTKTGKQIMNVPDGHTCIACLPVNGDSIACIGESRKLLVFNIDEIPEMKKGQGVTLQKFKNAKLLDIKIFNKEDGLSWNNNGKVKLEKNIIAFLGKRGSTGKLPPMGFHKNNRFSS.

In terms of domain architecture, Topo IIA-type catalytic spans 32-496; sequence LPDVRDGLKP…SFEEVTLTNQ (465 aa). The active-site O-(5'-phospho-DNA)-tyrosine intermediate is the Y120.

Belongs to the type II topoisomerase GyrA/ParC subunit family. ParC type 1 subfamily. In terms of assembly, heterotetramer composed of ParC and ParE.

It localises to the cell membrane. The enzyme catalyses ATP-dependent breakage, passage and rejoining of double-stranded DNA.. In terms of biological role, topoisomerase IV is essential for chromosome segregation. It relaxes supercoiled DNA. Performs the decatenation events required during the replication of a circular DNA molecule. This is DNA topoisomerase 4 subunit A from Rickettsia felis (strain ATCC VR-1525 / URRWXCal2) (Rickettsia azadi).